Consider the following 278-residue polypeptide: Undecaprenyl-diphosphatase (278 aa).

The next 6 helical transmembrane spans lie at 49-69 (ANTFKIVIQLGSILAVIVVFW), 97-117 (HVLIGLLPAAVLGLLFEDFID), 120-140 (LFSIDTVIIGLAAGAILMIAA), 197-217 (ADFTFIMAVPIMFGASALSLV), 226-246 (GDLGFYVVGFIASFGFALLSI), and 258-278 (LVPFAIYRLVLAAVLAVIVYM).

Belongs to the UppP family.

It localises to the cell membrane. It catalyses the reaction di-trans,octa-cis-undecaprenyl diphosphate + H2O = di-trans,octa-cis-undecaprenyl phosphate + phosphate + H(+). Functionally, catalyzes the dephosphorylation of undecaprenyl diphosphate (UPP). Confers resistance to bacitracin. This Exiguobacterium sibiricum (strain DSM 17290 / CCUG 55495 / CIP 109462 / JCM 13490 / 255-15) protein is Undecaprenyl-diphosphatase.